Consider the following 344-residue polypeptide: Dihydroorotase (344 aa).

2 residues coordinate Zn(2+): H13 and H15. Substrate-binding positions include 15–17 and N41; that span reads HLR. 3 residues coordinate Zn(2+): K98, H135, and H173. An N6-carboxylysine modification is found at K98. A substrate-binding site is contributed by H135. Substrate is bound at residue L218. Residue D247 participates in Zn(2+) binding. D247 is a catalytic residue. Substrate is bound by residues H251 and A263.

This sequence belongs to the metallo-dependent hydrolases superfamily. DHOase family. Class II DHOase subfamily. In terms of assembly, homodimer. Requires Zn(2+) as cofactor.

The catalysed reaction is (S)-dihydroorotate + H2O = N-carbamoyl-L-aspartate + H(+). It participates in pyrimidine metabolism; UMP biosynthesis via de novo pathway; (S)-dihydroorotate from bicarbonate: step 3/3. Functionally, catalyzes the reversible cyclization of carbamoyl aspartate to dihydroorotate. This is Dihydroorotase from Neisseria meningitidis serogroup C / serotype 2a (strain ATCC 700532 / DSM 15464 / FAM18).